A 288-amino-acid chain; its full sequence is SUR7 family protein pun1 (288 aa).

The Cytoplasmic portion of the chain corresponds to 1–11; the sequence is MGMGFNPIKAL. The helical transmembrane segment at 12 to 32 threads the bilayer; it reads FTGIGTVCVGVGALLSILCII. N-linked (GlcNAc...) asparagine glycans are attached at residues Asn33, Asn50, Asn59, Asn66, Asn122, Asn153, and Asn160. The Extracellular segment spans residues 33–185; it reads NQTQHNIAFQ…GACYAMRAMY (153 aa). The helical transmembrane segment at 186 to 206 threads the bilayer; it reads ILGFIFFALTIVSIVISCLPF. At 207–210 the chain is on the cytoplasmic side; the sequence is FGPL. A helical transmembrane segment spans residues 211 to 231; it reads FLNVFSFFATIFTFIAAVIAV. Residues 232-257 are Extracellular-facing; that stretch reads ATYRIAISELEKNIEILNIPIVLGKK. A helical membrane pass occupies residues 258 to 278; sequence IYAYSFLSAAAGLAACILYFI. Over 279 to 288 the chain is Cytoplasmic; the sequence is GNLTSGYSPL.

The protein belongs to the SUR7 family.

It localises to the golgi apparatus membrane. Its subcellular location is the cell membrane. The protein resides in the cell tip. In terms of biological role, contributes to the wild-type cellular response to nitrogen stress through signaling pathways that regulate the expression of genes involved in amino acid biosynthesis. Required for wild-type filamentous growth, cell growth, and cell-cell adhesion. The sequence is that of SUR7 family protein pun1 (pun1) from Schizosaccharomyces pombe (strain 972 / ATCC 24843) (Fission yeast).